The following is a 1164-amino-acid chain: DNA-directed RNA polymerase subunit beta' (1164 aa).

Positions 60, 62, 75, and 78 each coordinate Zn(2+). Positions 449, 451, and 453 each coordinate Mg(2+). Zn(2+)-binding residues include Cys-776, Cys-850, Cys-857, and Cys-860.

It belongs to the RNA polymerase beta' chain family. As to quaternary structure, the RNAP catalytic core consists of 2 alpha, 1 beta, 1 beta' and 1 omega subunit. When a sigma factor is associated with the core the holoenzyme is formed, which can initiate transcription. The cofactor is Mg(2+). Zn(2+) is required as a cofactor.

The enzyme catalyses RNA(n) + a ribonucleoside 5'-triphosphate = RNA(n+1) + diphosphate. Its function is as follows. DNA-dependent RNA polymerase catalyzes the transcription of DNA into RNA using the four ribonucleoside triphosphates as substrates. The protein is DNA-directed RNA polymerase subunit beta' of Moorella thermoacetica (strain ATCC 39073 / JCM 9320).